Here is a 220-residue protein sequence, read N- to C-terminus: uncharacterized protein (220 aa).

The segment at 196 to 220 (KDDNSKDDNNDSEDLSKQIDNLKLD) is disordered.

This is an uncharacterized protein from Invertebrate iridescent virus 6 (IIV-6).